Consider the following 155-residue polypeptide: Conopressin/neurophysin (155 aa).

A signal peptide spans 1-26; sequence MMSSLCGMPLTYLLTAAVLSLSLTDA. Cysteines 27 and 32 form a disulfide. Residue Gly35 is modified to Glycine amide. 7 disulfides stabilise this stretch: Cys50–Cys94, Cys53–Cys67, Cys61–Cys84, Cys68–Cys74, Cys101–Cys115, Cys109–Cys127, and Cys116–Cys121. N-linked (GlcNAc...) asparagine glycosylation occurs at Asn88.

This sequence belongs to the vasopressin/oxytocin family. Seven disulfide bonds are present in neurophysin.

Its subcellular location is the secreted. This Lymnaea stagnalis (Great pond snail) protein is Conopressin/neurophysin.